A 306-amino-acid polypeptide reads, in one-letter code: MELKDYYAIMGVKPTDDLKTIKTAYRRLARKYHPDVSKEPDAEARFKEVAEAWEVLSDEQRRAEYDQMWQHRNDPQFNRQFHHSDGQSFNAEDFDDIFSSIFGQHARQSRQRPATRGHDIEIEVAVFLEETLTEHKRTISYNLPVYNAFGMIEQEIPKTLNVKIPAGVGNGQRIRLKGQGTPGENGGPNGDLWLVIHIAPHPLFDIVGQDLEIVVPVSPWEAALGAKVTVPTLKESILLTIPPGSQAGQRLRVKGKGLVSKKQTGDLYAVLKIVMPPKPDENTAALWQQLADAQSSFDPRKDWGKA.

The J domain maps to 5–69 (DYYAIMGVKP…QRRAEYDQMW (65 aa)).

The protein resides in the cytoplasm. It localises to the nucleoid. DNA-binding protein that preferentially recognizes a curved DNA sequence. It is probably a functional analog of DnaJ; displays overlapping activities with DnaJ, but functions under different conditions, probably acting as a molecular chaperone in an adaptive response to environmental stresses other than heat shock. Lacks autonomous chaperone activity; binds native substrates and targets them for recognition by DnaK. Its activity is inhibited by the binding of CbpM. The sequence is that of Curved DNA-binding protein from Escherichia coli (strain 55989 / EAEC).